The sequence spans 354 residues: Kelch domain-containing protein 8B (354 aa).

8 Kelch repeats span residues 1–31 (MSAG…HQDG), 32–79 (HLLV…VLGK), 81–127 (VLVV…ERDG), 128–175 (MVYA…LHGN), 176–222 (KIYV…MAEG), 224–281 (VFSL…SLGG), 282–329 (HIVA…QAGP), and 331–354 (LFVI…RDGV).

Its subcellular location is the cytoplasm. It localises to the midbody. Its function is as follows. Involved in pinching off the separated nuclei at the cleavage furrow and in cytokinesis. Required for mitotic integrity and maintenance of chromosomal stability. Protects cells against mitotic errors, centrosomal amplification, micronucleus formation and aneuploidy. Plays a key role of midbody function involving abscission of the daughter cells during cytokinesis and appropriate chromosomal and nuclear segregation into the daughter cells. In Homo sapiens (Human), this protein is Kelch domain-containing protein 8B.